A 241-amino-acid polypeptide reads, in one-letter code: Uridylate kinase (241 aa).

An ATP-binding site is contributed by 9 to 10 (GS). Gly44 contacts UMP. 2 residues coordinate ATP: Gly45 and Arg49. Residues Asp66 and 114 to 120 (VTPGQTT) each bind UMP. 3 residues coordinate ATP: Thr140, Tyr146, and Asp149. Residues 222–241 (TDVIPTGSEEPIYWTGSSDA) are disordered.

It belongs to the UMP kinase family. In terms of assembly, homohexamer.

It is found in the cytoplasm. The catalysed reaction is UMP + ATP = UDP + ADP. It participates in pyrimidine metabolism; CTP biosynthesis via de novo pathway; UDP from UMP (UMPK route): step 1/1. Inhibited by UTP. Its function is as follows. Catalyzes the reversible phosphorylation of UMP to UDP. In Halorubrum lacusprofundi (strain ATCC 49239 / DSM 5036 / JCM 8891 / ACAM 34), this protein is Uridylate kinase.